The sequence spans 447 residues: Phosphoglucosamine mutase (447 aa).

Ser102 serves as the catalytic Phosphoserine intermediate. Ser102, Asp241, Asp243, and Asp245 together coordinate Mg(2+). A Phosphoserine modification is found at Ser102.

It belongs to the phosphohexose mutase family. Mg(2+) is required as a cofactor. Activated by phosphorylation.

The catalysed reaction is alpha-D-glucosamine 1-phosphate = D-glucosamine 6-phosphate. Catalyzes the conversion of glucosamine-6-phosphate to glucosamine-1-phosphate. This Pseudomonas syringae pv. tomato (strain ATCC BAA-871 / DC3000) protein is Phosphoglucosamine mutase.